The primary structure comprises 98 residues: UPF0213 protein in ldhD 5'region (98 aa).

A GIY-YIG domain is found at N7 to K84.

It belongs to the UPF0213 family.

In Pediococcus acidilactici, this protein is UPF0213 protein in ldhD 5'region.